A 282-amino-acid chain; its full sequence is tRNA uridine(34) hydroxylase (282 aa).

Positions 128–222 (DGREVVMLDT…YFEEVGADHY (95 aa)) constitute a Rhodanese domain. The active-site Cysteine persulfide intermediate is Cys182.

It belongs to the TrhO family.

The enzyme catalyses uridine(34) in tRNA + AH2 + O2 = 5-hydroxyuridine(34) in tRNA + A + H2O. In terms of biological role, catalyzes oxygen-dependent 5-hydroxyuridine (ho5U) modification at position 34 in tRNAs. This Ralstonia nicotianae (strain ATCC BAA-1114 / GMI1000) (Ralstonia solanacearum) protein is tRNA uridine(34) hydroxylase.